The primary structure comprises 381 residues: Early boundary activity protein 2 (381 aa).

Positions 210-245 are disordered; it reads NDAEDVPAPPSKRPRHMSTSSSESHIPDTASEKDEK. The BEN domain maps to 268–365; sequence PNGTQITAHQ…TKCADTAKKY (98 aa).

In terms of assembly, the heterotrimeric Elba complex consists of Elba1, Elba2 and Elba3.

It is found in the nucleus. Its function is as follows. The heterotrimeric Elba complex is required for chromatin domain boundary function during early embryogenesis. It binds to a 8-bp sequence 5'-CCAATAAG-3' in the Fab-7 insulator or boundary element in the bithorax complex and contributes to its insulator or boundary activity. Elba2 can act as a transcriptional repressor and binds the palindromic sequence 5'-CCAATTGG-3' to mediate transcriptional repression. The chain is Early boundary activity protein 2 from Drosophila melanogaster (Fruit fly).